Consider the following 316-residue polypeptide: MAKSQALGNAPLTSTVAENATTRSTSKPNIWRDYLTMTKPKVVAMLLLTALVGMCLAVPGIPPAKAVILGLIGIGFQSAAAAAFNHVLDRRLDTQMARTYNRPLAKGRIETWKAVVFASTLMVMGFVILLELNALTAWLTMASLVGYAVVYTVWLKHATPQNIVIGGIAGAAPPLLGWTAVTGQLDPHALLLVMLVFTWTPPHFWALAIHRRDDYAKAGIPMLPVTHGIEFTKTMVLLYTVMLFIVGLLPWLTGMSGGVYLVGSSLLNLGFIGYALKLKFADSKGHAWATFKYSIWHLLALFVVLLGDHWITSLMF.

Positions 1–21 (MAKSQALGNAPLTSTVAENAT) are disordered. The segment covering 11–21 (PLTSTVAENAT) has biased composition (polar residues). A run of 9 helical transmembrane segments spans residues 42–62 (VVAM…PGIP), 67–87 (VILG…FNHV), 115–135 (VVFA…LNAL), 136–156 (TAWL…VWLK), 163–183 (IVIG…AVTG), 189–209 (ALLL…ALAI), 235–255 (MVLL…LTGM), 256–276 (SGGV…GYAL), and 295–315 (IWHL…TSLM).

The protein belongs to the UbiA prenyltransferase family. Protoheme IX farnesyltransferase subfamily.

It is found in the cell inner membrane. The enzyme catalyses heme b + (2E,6E)-farnesyl diphosphate + H2O = Fe(II)-heme o + diphosphate. It participates in porphyrin-containing compound metabolism; heme O biosynthesis; heme O from protoheme: step 1/1. Its function is as follows. Converts heme B (protoheme IX) to heme O by substitution of the vinyl group on carbon 2 of heme B porphyrin ring with a hydroxyethyl farnesyl side group. This chain is Protoheme IX farnesyltransferase, found in Photobacterium profundum (strain SS9).